We begin with the raw amino-acid sequence, 640 residues long: Lysophospholipase (640 aa).

The N-terminal stretch at 1–25 (MWFLNSVNLLFLVCSVALHLDAVNA) is a signal peptide. In terms of domain architecture, PLA2c spans 38–589 (DCDENINLVR…EKYCWNGTVD (552 aa)). Residues Asn-84, Asn-126, Asn-163, Asn-173, Asn-218, Asn-280, Asn-310, Asn-317, Asn-348, Asn-391, Asn-492, Asn-516, Asn-544, Asn-568, and Asn-585 are each glycosylated (N-linked (GlcNAc...) asparagine). The segment covering 594 to 610 (ISSTTSSSASSTSTSDS) has biased composition (low complexity). The disordered stretch occupies residues 594–616 (ISSTTSSSASSTSTSDSGNKENS).

It belongs to the lysophospholipase family. Post-translationally, highly glycosylated.

The protein localises to the secreted. The enzyme catalyses a 1-acyl-sn-glycero-3-phosphocholine + H2O = sn-glycerol 3-phosphocholine + a fatty acid + H(+). Functionally, catalyzes the release of fatty acids from lysophospholipids. At acidic pH the enzyme hydrolyzes all phospholipid substrates without metal ion. On the other hand, at alkaline pH the enzyme shows substrate specificity for phosphatidylcholine and lysophosphatidylcholine and requires Ca(2+), Fe(3+), or Al(3+) for the activity. The polypeptide is Lysophospholipase (PLB) (Kluyveromyces lactis (strain ATCC 8585 / CBS 2359 / DSM 70799 / NBRC 1267 / NRRL Y-1140 / WM37) (Yeast)).